The chain runs to 491 residues: MSQLKIGSSQCLWTSICIVLFVLSMARGAVSRNYGDALTKSLLYFEAQRSGKLPSNQRVTWRGDSALRDGSDAHVDLTGGYYDAGDNMKFGFPLAFFTTMLAWSNIEMATQLKAHQEQENALAALKWATDFLIKAHPEPNVLYGQVGDGNSDHECWMRPEDMTTPRPSFRIDAQHPGSDLAGETAAAMAAASIAFAPSDEAYAQILIGHAKELFEFAKAYPGIYQNSITNAGGFYASSGYEDELLWAAAWLHRATNDQIYLDYLTQASGTGGPRTAFSWDDKFVGAQVLVAKLALEGKVESNGKIAEYKSMAEQFICNCAQKGSNNVKKTPGGLLYFLPWNNLQYTTAATFVLSAYSKYLTDAKASIQCPNGALQASDLLDLARSQVDYILGSNPQNMSYMVGVGTNYPKKPHHRAASIVSITKDKTPVTCSEGFDAWFNNPAPNPNVLMGAVVGGPNDNDVYGDERTDYQHAEPAPATAAPFVGVLAAVA.

Residues 1-31 form the signal peptide; that stretch reads MSQLKIGSSQCLWTSICIVLFVLSMARGAVS. Residue Asp-86 is the Nucleophile of the active site. Asn-397 carries N-linked (GlcNAc...) asparagine glycosylation. Active-site residues include His-413, Asp-465, and Glu-474.

This sequence belongs to the glycosyl hydrolase 9 (cellulase E) family.

It is found in the secreted. It carries out the reaction Endohydrolysis of (1-&gt;4)-beta-D-glucosidic linkages in cellulose, lichenin and cereal beta-D-glucans.. The sequence is that of Endoglucanase 14 from Arabidopsis thaliana (Mouse-ear cress).